The following is a 275-amino-acid chain: Large ribosomal subunit protein uL2 (275 aa).

2 disordered regions span residues 34–59 (LEKK…GGHK) and 223–275 (VAMN…RNKK).

It belongs to the universal ribosomal protein uL2 family. Part of the 50S ribosomal subunit. Forms a bridge to the 30S subunit in the 70S ribosome.

One of the primary rRNA binding proteins. Required for association of the 30S and 50S subunits to form the 70S ribosome, for tRNA binding and peptide bond formation. It has been suggested to have peptidyltransferase activity; this is somewhat controversial. Makes several contacts with the 16S rRNA in the 70S ribosome. This chain is Large ribosomal subunit protein uL2, found in Teredinibacter turnerae (strain ATCC 39867 / T7901).